Reading from the N-terminus, the 347-residue chain is Phenylalanine--tRNA ligase alpha subunit (347 aa).

Residue Glu-261 participates in Mg(2+) binding.

It belongs to the class-II aminoacyl-tRNA synthetase family. Phe-tRNA synthetase alpha subunit type 1 subfamily. In terms of assembly, tetramer of two alpha and two beta subunits. Requires Mg(2+) as cofactor.

It is found in the cytoplasm. The catalysed reaction is tRNA(Phe) + L-phenylalanine + ATP = L-phenylalanyl-tRNA(Phe) + AMP + diphosphate + H(+). The sequence is that of Phenylalanine--tRNA ligase alpha subunit from Streptococcus equi subsp. equi (strain 4047).